A 386-amino-acid chain; its full sequence is Patatin-2-Kuras 3 (386 aa).

The signal sequence occupies residues 1–23 (MATTKSVLVLFFMILATTSSTCA). Positions 32–229 (LSIDGGGIKG…TVGDPALLSL (198 aa)) constitute a PNPLA domain. Positions 36–41 (GGGIKG) match the GXGXXG motif. The GXSXG signature appears at 75 to 79 (GTSTG). Catalysis depends on S77, which acts as the Nucleophile. N-linked (GlcNAc...) asparagine glycosylation is present at N115. D215 (proton acceptor) is an active-site residue. Positions 215–217 (DGA) match the DGA/G motif. A coiled-coil region spans residues 321-384 (ENALTGTTTE…DRKKLRANKA (64 aa)).

This sequence belongs to the patatin family. Tuber.

Its subcellular location is the vacuole. In terms of biological role, probable lipolytic acyl hydrolase (LAH), an activity which is thought to be involved in the response of tubers to pathogens. The sequence is that of Patatin-2-Kuras 3 (pat2-k3) from Solanum tuberosum (Potato).